A 211-amino-acid polypeptide reads, in one-letter code: Histidine biosynthesis bifunctional protein HisIE (211 aa).

The segment at 1 to 122 (MSFKTAEVSS…DPQEESQMVW (122 aa)) is phosphoribosyl-AMP cyclohydrolase. The tract at residues 123 to 211 (LHQLEQLLAA…VINKLKERHK (89 aa)) is phosphoribosyl-ATP pyrophosphohydrolase.

The protein in the N-terminal section; belongs to the PRA-CH family. In the C-terminal section; belongs to the PRA-PH family.

It localises to the cytoplasm. The enzyme catalyses 1-(5-phospho-beta-D-ribosyl)-ATP + H2O = 1-(5-phospho-beta-D-ribosyl)-5'-AMP + diphosphate + H(+). The catalysed reaction is 1-(5-phospho-beta-D-ribosyl)-5'-AMP + H2O = 1-(5-phospho-beta-D-ribosyl)-5-[(5-phospho-beta-D-ribosylamino)methylideneamino]imidazole-4-carboxamide. The protein operates within amino-acid biosynthesis; L-histidine biosynthesis; L-histidine from 5-phospho-alpha-D-ribose 1-diphosphate: step 2/9. Its pathway is amino-acid biosynthesis; L-histidine biosynthesis; L-histidine from 5-phospho-alpha-D-ribose 1-diphosphate: step 3/9. This is Histidine biosynthesis bifunctional protein HisIE from Vibrio vulnificus (strain CMCP6).